A 393-amino-acid chain; its full sequence is NAD(P)H-quinone oxidoreductase subunit H, chloroplastic (393 aa).

This sequence belongs to the complex I 49 kDa subunit family. In terms of assembly, NDH is composed of at least 16 different subunits, 5 of which are encoded in the nucleus.

The protein resides in the plastid. Its subcellular location is the chloroplast thylakoid membrane. The enzyme catalyses a plastoquinone + NADH + (n+1) H(+)(in) = a plastoquinol + NAD(+) + n H(+)(out). It catalyses the reaction a plastoquinone + NADPH + (n+1) H(+)(in) = a plastoquinol + NADP(+) + n H(+)(out). Functionally, NDH shuttles electrons from NAD(P)H:plastoquinone, via FMN and iron-sulfur (Fe-S) centers, to quinones in the photosynthetic chain and possibly in a chloroplast respiratory chain. The immediate electron acceptor for the enzyme in this species is believed to be plastoquinone. Couples the redox reaction to proton translocation, and thus conserves the redox energy in a proton gradient. The sequence is that of NAD(P)H-quinone oxidoreductase subunit H, chloroplastic from Manihot esculenta (Cassava).